The sequence spans 117 residues: Large ribosomal subunit protein uL18 (117 aa).

Belongs to the universal ribosomal protein uL18 family. In terms of assembly, part of the 50S ribosomal subunit; part of the 5S rRNA/L5/L18/L25 subcomplex. Contacts the 5S and 23S rRNAs.

This is one of the proteins that bind and probably mediate the attachment of the 5S RNA into the large ribosomal subunit, where it forms part of the central protuberance. The protein is Large ribosomal subunit protein uL18 of Vibrio proteolyticus (Aeromonas proteolytica).